The sequence spans 398 residues: 1-deoxy-D-xylulose 5-phosphate reductoisomerase (398 aa).

Residues Thr-10, Gly-11, Ser-12, Ile-13, Gly-36, Lys-37, Asn-38, and Asn-124 each contribute to the NADPH site. Position 125 (Lys-125) interacts with 1-deoxy-D-xylulose 5-phosphate. Glu-126 is a binding site for NADPH. Residue Asp-150 participates in Mn(2+) binding. The 1-deoxy-D-xylulose 5-phosphate site is built by Ser-151, Glu-152, Ser-186, and His-209. Glu-152 is a Mn(2+) binding site. Position 215 (Gly-215) interacts with NADPH. 1-deoxy-D-xylulose 5-phosphate-binding residues include Ser-222, Asn-227, Lys-228, and Glu-231. A Mn(2+)-binding site is contributed by Glu-231.

This sequence belongs to the DXR family. Homodimer. Requires Mg(2+) as cofactor. Mn(2+) serves as cofactor.

It carries out the reaction 2-C-methyl-D-erythritol 4-phosphate + NADP(+) = 1-deoxy-D-xylulose 5-phosphate + NADPH + H(+). The protein operates within isoprenoid biosynthesis; isopentenyl diphosphate biosynthesis via DXP pathway; isopentenyl diphosphate from 1-deoxy-D-xylulose 5-phosphate: step 1/6. Functionally, catalyzes the NADPH-dependent rearrangement and reduction of 1-deoxy-D-xylulose-5-phosphate (DXP) to 2-C-methyl-D-erythritol 4-phosphate (MEP). The polypeptide is 1-deoxy-D-xylulose 5-phosphate reductoisomerase (Salmonella choleraesuis (strain SC-B67)).